Here is an 845-residue protein sequence, read N- to C-terminus: Putative DEAD-box ATP-dependent RNA helicase 33 (845 aa).

Disordered stretches follow at residues 129-149 (GHPDSGEKTAKLKQSHGPMSP) and 282-302 (KFRKNDSSTEEDSDEEGNEGK). Residues 289 to 298 (STEEDSDEEG) are compositionally biased toward acidic residues. A Q motif motif is present at residues 375 to 403 (KRFDESCISPLTLKALSASGIVKMTRVQD). Residues 406-590 (LSECLDGKDA…QLVLKRDHSY (185 aa)) enclose the Helicase ATP-binding domain. 419-426 (AKTGTGKS) contributes to the ATP binding site. Residues 538–541 (DEAD) carry the DEAD box motif. One can recognise a Helicase C-terminal domain in the interval 624–778 (LLKEHINNMP…QVDQSMAKID (155 aa)).

Belongs to the DEAD box helicase family.

The catalysed reaction is ATP + H2O = ADP + phosphate + H(+). The sequence is that of Putative DEAD-box ATP-dependent RNA helicase 33 (RH33) from Arabidopsis thaliana (Mouse-ear cress).